The chain runs to 214 residues: uncharacterized protein (214 aa).

The first 24 residues, 1–24 (MKIWIKAICITSFVIQMSACSSSA), serve as a signal peptide directing secretion. The TNase-like domain maps to 64 to 197 (ETVKGKVLHI…KEAKAGVWSI (134 aa)). Active-site residues include Arg-91, Glu-99, and Arg-142.

This is an uncharacterized protein from Bacillus anthracis.